The following is a 299-amino-acid chain: Fluorinase (299 aa).

Residues D15, 20–22, Y76, S157, D210, N215, 269–270, and 277–279 contribute to the S-adenosyl-L-methionine site; these read DDS, SR, and RNA.

The protein belongs to the SAM hydrolase / SAM-dependent halogenase family.

It catalyses the reaction fluoride + S-adenosyl-L-methionine = 5'-deoxy-5'-fluoroadenosine + L-methionine. With respect to regulation, activity is not severely affected by most metal ions (Mg(2+), Mn(2+), Co(2+) and Fe(2+)), but both Cu(2+) and Zn(2+) are strong inhibitors. Functionally, catalyzes the formation of a C-F bond by combining S-adenosyl-L-methionine (SAM) and fluoride to generate 5'-fluoro-5'-deoxyadenosine (5'-FDA) and L-methionine. The chain is Fluorinase from Actinopolyspora mzabensis.